We begin with the raw amino-acid sequence, 490 residues long: Betaine aldehyde dehydrogenase (490 aa).

Residue asparagine 93 participates in K(+) binding. An NAD(+)-binding site is contributed by 150 to 152 (GAW). Catalysis depends on lysine 162, which acts as the Charge relay system. 176–179 (KPSE) is an NAD(+) binding site. Valine 180 is a binding site for K(+). 230-233 (GTAT) contacts NAD(+). A K(+)-binding site is contributed by leucine 246. The active-site Proton acceptor is the glutamate 252. 3 residues coordinate NAD(+): glycine 254, cysteine 286, and glutamate 387. Cysteine 286 serves as the catalytic Nucleophile. At cysteine 286 the chain carries Cysteine sulfenic acid (-SOH). Residues lysine 457 and glycine 460 each contribute to the K(+) site. Glutamate 464 serves as the catalytic Charge relay system.

The protein belongs to the aldehyde dehydrogenase family. Dimer of dimers. It depends on K(+) as a cofactor.

The enzyme catalyses betaine aldehyde + NAD(+) + H2O = glycine betaine + NADH + 2 H(+). The protein operates within amine and polyamine biosynthesis; betaine biosynthesis via choline pathway; betaine from betaine aldehyde: step 1/1. Functionally, involved in the biosynthesis of the osmoprotectant glycine betaine. Catalyzes the irreversible oxidation of betaine aldehyde to the corresponding acid. The polypeptide is Betaine aldehyde dehydrogenase (Xanthomonas euvesicatoria pv. vesicatoria (strain 85-10) (Xanthomonas campestris pv. vesicatoria)).